Reading from the N-terminus, the 102-residue chain is Small ribosomal subunit protein uS10 (102 aa).

This sequence belongs to the universal ribosomal protein uS10 family. Part of the 30S ribosomal subunit.

Functionally, involved in the binding of tRNA to the ribosomes. This chain is Small ribosomal subunit protein uS10, found in Streptococcus thermophilus (strain CNRZ 1066).